The primary structure comprises 319 residues: Beta-ketoacyl-[acyl-carrier-protein] synthase III (319 aa).

Catalysis depends on residues Cys-115 and His-246. Residues 247–251 (QANLR) are ACP-binding. Residue Asn-276 is part of the active site.

It belongs to the thiolase-like superfamily. FabH family. Homodimer.

It localises to the cytoplasm. The catalysed reaction is malonyl-[ACP] + acetyl-CoA + H(+) = 3-oxobutanoyl-[ACP] + CO2 + CoA. It functions in the pathway lipid metabolism; fatty acid biosynthesis. Catalyzes the condensation reaction of fatty acid synthesis by the addition to an acyl acceptor of two carbons from malonyl-ACP. Catalyzes the first condensation reaction which initiates fatty acid synthesis and may therefore play a role in governing the total rate of fatty acid production. Possesses both acetoacetyl-ACP synthase and acetyl transacylase activities. Its substrate specificity determines the biosynthesis of branched-chain and/or straight-chain of fatty acids. This chain is Beta-ketoacyl-[acyl-carrier-protein] synthase III, found in Coxiella burnetii (strain RSA 331 / Henzerling II).